The sequence spans 201 residues: LexA repressor (201 aa).

Positions R28 to K48 form a DNA-binding region, H-T-H motif. Residues S118 and K155 each act as for autocatalytic cleavage activity in the active site.

It belongs to the peptidase S24 family. In terms of assembly, homodimer.

The enzyme catalyses Hydrolysis of Ala-|-Gly bond in repressor LexA.. Represses a number of genes involved in the response to DNA damage (SOS response), including recA and lexA. In the presence of single-stranded DNA, RecA interacts with LexA causing an autocatalytic cleavage which disrupts the DNA-binding part of LexA, leading to derepression of the SOS regulon and eventually DNA repair. The polypeptide is LexA repressor (Photorhabdus laumondii subsp. laumondii (strain DSM 15139 / CIP 105565 / TT01) (Photorhabdus luminescens subsp. laumondii)).